Reading from the N-terminus, the 105-residue chain is Putative ferredoxin-3 (105 aa).

4Fe-4S ferredoxin-type domains are found at residues 17 to 46 and 70 to 100; these read YLTA…LHGI and TIMV…HVAA. [4Fe-4S] cluster-binding residues include Cys26, Cys29, Cys32, Cys36, Cys80, Cys83, Cys86, and Cys90.

Requires [4Fe-4S] cluster as cofactor.

Its function is as follows. Ferredoxins are iron-sulfur proteins that transfer electrons in a wide variety of metabolic reactions. This Sinorhizobium fredii (strain NBRC 101917 / NGR234) protein is Putative ferredoxin-3 (fdxB).